The chain runs to 230 residues: Large ribosomal subunit protein uL1 (230 aa).

This sequence belongs to the universal ribosomal protein uL1 family. Part of the 50S ribosomal subunit.

Its function is as follows. Binds directly to 23S rRNA. The L1 stalk is quite mobile in the ribosome, and is involved in E site tRNA release. In terms of biological role, protein L1 is also a translational repressor protein, it controls the translation of the L11 operon by binding to its mRNA. This is Large ribosomal subunit protein uL1 from Leuconostoc citreum (strain KM20).